The sequence spans 191 residues: UPF0312 protein PA0423 (191 aa).

Residues 1–23 (MLKKTLAALALGSALFTAGQAMA) form the signal peptide.

This sequence belongs to the UPF0312 family. Type 1 subfamily.

The protein localises to the periplasm. The chain is UPF0312 protein PA0423 from Pseudomonas aeruginosa (strain ATCC 15692 / DSM 22644 / CIP 104116 / JCM 14847 / LMG 12228 / 1C / PRS 101 / PAO1).